The sequence spans 237 residues: Uridylate kinase (237 aa).

10-13 is an ATP binding site; that stretch reads KLSG. Glycine 51 lines the UMP pocket. 2 residues coordinate ATP: glycine 52 and arginine 56. UMP is bound by residues aspartate 71 and 132–139; that span reads MGMPFFST. The ATP site is built by asparagine 160, tyrosine 166, and aspartate 169.

This sequence belongs to the UMP kinase family. As to quaternary structure, homohexamer.

The protein localises to the cytoplasm. The catalysed reaction is UMP + ATP = UDP + ADP. The protein operates within pyrimidine metabolism; CTP biosynthesis via de novo pathway; UDP from UMP (UMPK route): step 1/1. Its activity is regulated as follows. Inhibited by UTP. In terms of biological role, catalyzes the reversible phosphorylation of UMP to UDP. The protein is Uridylate kinase of Nocardioides sp. (strain ATCC BAA-499 / JS614).